The chain runs to 866 residues: Probable LRR receptor-like serine/threonine-protein kinase At5g16900 (866 aa).

The signal sequence occupies residues 1 to 20 (MEDRHRYLFFIFAIIHYVQA). At 21 to 515 (QQGFISLDCG…SSSGNKETTV (495 aa)) the chain is on the extracellular side. Residues N137, N176, N230, N251, N331, N404, N409, and N436 are each glycosylated (N-linked (GlcNAc...) asparagine). LRR repeat units follow at residues 415–438 (RIISLDLSSHKLTGKIVPDIQNLT), 439–461 (QLQKLDLSNNKLTGGVPEFLANM), and 463–485 (SLLFINLSNNNLVGSIPQALLDR). N468 and N505 each carry an N-linked (GlcNAc...) asparagine glycan. The chain crosses the membrane as a helical span at residues 516–536 (IAPVAAAIAIFIAVLVLIIVF). At 537 to 866 (IKKRPSSIRA…LNQVIDSKSS (330 aa)) the chain is on the cytoplasmic side. Position 564 is a phosphothreonine (T564). The region spanning 573-846 (NNFERVIGEG…HVVQELKQCI (274 aa)) is the Protein kinase domain. ATP is bound by residues 579 to 587 (IGEGGFGVV) and K601. Y646 carries the phosphotyrosine modification. D698 functions as the Proton acceptor in the catalytic mechanism. S732 is subject to Phosphoserine. A phosphothreonine mark is found at T733 and T738. Position 746 is a phosphotyrosine (Y746).

It belongs to the protein kinase superfamily. Ser/Thr protein kinase family.

It is found in the membrane. The catalysed reaction is L-seryl-[protein] + ATP = O-phospho-L-seryl-[protein] + ADP + H(+). It catalyses the reaction L-threonyl-[protein] + ATP = O-phospho-L-threonyl-[protein] + ADP + H(+). This chain is Probable LRR receptor-like serine/threonine-protein kinase At5g16900, found in Arabidopsis thaliana (Mouse-ear cress).